The primary structure comprises 356 residues: Cyclin-D4-1 (356 aa).

This sequence belongs to the cyclin family. Cyclin D subfamily.

In Oryza sativa subsp. japonica (Rice), this protein is Cyclin-D4-1 (CYCD4-1).